We begin with the raw amino-acid sequence, 276 residues long: Pantothenate synthetase (276 aa).

Residue 26–33 (MGFLHAGH) participates in ATP binding. His33 acts as the Proton donor in catalysis. Gln57 contributes to the (R)-pantoate binding site. Gln57 is a binding site for beta-alanine. 143–146 (GQKD) contributes to the ATP binding site. Gln149 lines the (R)-pantoate pocket. Residues Ile172 and 180–183 (MSSR) contribute to the ATP site.

It belongs to the pantothenate synthetase family. As to quaternary structure, homodimer.

The protein resides in the cytoplasm. It carries out the reaction (R)-pantoate + beta-alanine + ATP = (R)-pantothenate + AMP + diphosphate + H(+). The protein operates within cofactor biosynthesis; (R)-pantothenate biosynthesis; (R)-pantothenate from (R)-pantoate and beta-alanine: step 1/1. In terms of biological role, catalyzes the condensation of pantoate with beta-alanine in an ATP-dependent reaction via a pantoyl-adenylate intermediate. This is Pantothenate synthetase from Herpetosiphon aurantiacus (strain ATCC 23779 / DSM 785 / 114-95).